Reading from the N-terminus, the 334-residue chain is Beta-hexosaminidase (334 aa).

Residues aspartate 60, arginine 68, arginine 133, and 163-164 (KH) contribute to the substrate site. The Proton donor/acceptor role is filled by histidine 176. Catalysis depends on aspartate 247, which acts as the Nucleophile.

The protein belongs to the glycosyl hydrolase 3 family. NagZ subfamily.

The protein localises to the cytoplasm. The enzyme catalyses Hydrolysis of terminal non-reducing N-acetyl-D-hexosamine residues in N-acetyl-beta-D-hexosaminides.. It participates in cell wall biogenesis; peptidoglycan recycling. In terms of biological role, plays a role in peptidoglycan recycling by cleaving the terminal beta-1,4-linked N-acetylglucosamine (GlcNAc) from peptide-linked peptidoglycan fragments, giving rise to free GlcNAc, anhydro-N-acetylmuramic acid and anhydro-N-acetylmuramic acid-linked peptides. The protein is Beta-hexosaminidase of Xanthomonas euvesicatoria pv. vesicatoria (strain 85-10) (Xanthomonas campestris pv. vesicatoria).